A 766-amino-acid chain; its full sequence is Phosphoribosylformylglycinamidine synthase subunit PurL (766 aa).

Residue histidine 49 is part of the active site. Residues tyrosine 52 and lysine 91 each contribute to the ATP site. Residue glutamate 93 coordinates Mg(2+). Substrate is bound by residues 94–97 (SHNH) and arginine 116. Catalysis depends on histidine 95, which acts as the Proton acceptor. Mg(2+) is bound at residue aspartate 117. Glutamine 240 serves as a coordination point for substrate. Aspartate 268 provides a ligand contact to Mg(2+). 312-314 (ESQ) provides a ligand contact to substrate. The ATP site is built by aspartate 508 and glycine 545. Asparagine 546 contacts Mg(2+). Serine 548 serves as a coordination point for substrate.

Belongs to the FGAMS family. Monomer. Part of the FGAM synthase complex composed of 1 PurL, 1 PurQ and 2 PurS subunits.

It is found in the cytoplasm. It catalyses the reaction N(2)-formyl-N(1)-(5-phospho-beta-D-ribosyl)glycinamide + L-glutamine + ATP + H2O = 2-formamido-N(1)-(5-O-phospho-beta-D-ribosyl)acetamidine + L-glutamate + ADP + phosphate + H(+). The protein operates within purine metabolism; IMP biosynthesis via de novo pathway; 5-amino-1-(5-phospho-D-ribosyl)imidazole from N(2)-formyl-N(1)-(5-phospho-D-ribosyl)glycinamide: step 1/2. Part of the phosphoribosylformylglycinamidine synthase complex involved in the purines biosynthetic pathway. Catalyzes the ATP-dependent conversion of formylglycinamide ribonucleotide (FGAR) and glutamine to yield formylglycinamidine ribonucleotide (FGAM) and glutamate. The FGAM synthase complex is composed of three subunits. PurQ produces an ammonia molecule by converting glutamine to glutamate. PurL transfers the ammonia molecule to FGAR to form FGAM in an ATP-dependent manner. PurS interacts with PurQ and PurL and is thought to assist in the transfer of the ammonia molecule from PurQ to PurL. The sequence is that of Phosphoribosylformylglycinamidine synthase subunit PurL from Synechococcus sp. (strain CC9902).